Reading from the N-terminus, the 472-residue chain is MTKPALRSDIPMKPTAHKQEKPSVAFAHLGCEKNRVDTEHMLGLLTEAGYSVSSDENDAAVVVVNTCSFIQDAREESVRTLIGLAEQGKELIIAGCLAQHFQEELLESIPEAKAIVGTGDYQHIVDVLKRVEAGERVNRVSAFPTFVGDETLPRQRTTDQAVAYLKVAEGCDYRCAFCIIPKLRGDQRSRPVESIVAEAHQLAEQGVQELILISQITTNYGLDLYGKPKFAELLQALGEVDIPWVRVHYAYPTGLTPEVLAAYREVPNVLRYLDLPLQHSHPDVLRAMNRPWQTDVNERLLDRIREQLPDAVLRTTLIVGFPGETEDHFNHLAAFIERQRFDHVGVFTFSPEDGTAAADLPNRVDPSIAAARKDRLMALQQPISAERNQRWVGRTIDVLIEQHNPETGAMIGRCDRFAPEVDGEVLVLPSEKGLQASPGTMVPVFITGSDVYDLTGQLVDTNAMAVTAQTSQ.

Positions 22-133 (PSVAFAHLGC…IVDVLKRVEA (112 aa)) constitute an MTTase N-terminal domain. [4Fe-4S] cluster contacts are provided by Cys-31, Cys-67, Cys-96, Cys-171, Cys-175, and Cys-178. Positions 157–386 (TTDQAVAYLK…MALQQPISAE (230 aa)) constitute a Radical SAM core domain. One can recognise a TRAM domain in the interval 389 to 460 (QRWVGRTIDV…VYDLTGQLVD (72 aa)).

This sequence belongs to the methylthiotransferase family. RimO subfamily. Requires [4Fe-4S] cluster as cofactor.

Its subcellular location is the cytoplasm. It carries out the reaction L-aspartate(89)-[ribosomal protein uS12]-hydrogen + (sulfur carrier)-SH + AH2 + 2 S-adenosyl-L-methionine = 3-methylsulfanyl-L-aspartate(89)-[ribosomal protein uS12]-hydrogen + (sulfur carrier)-H + 5'-deoxyadenosine + L-methionine + A + S-adenosyl-L-homocysteine + 2 H(+). Catalyzes the methylthiolation of an aspartic acid residue of ribosomal protein uS12. In Prochlorococcus marinus (strain MIT 9303), this protein is Ribosomal protein uS12 methylthiotransferase RimO.